The sequence spans 260 residues: Adenosylcobinamide-GDP ribazoletransferase (260 aa).

A run of 6 helical transmembrane segments spans residues 40-60 (AFPF…LLLL), 64-84 (ADPL…TGAL), 117-137 (YGAI…AAIV), 142-162 (PLAA…AITW), 189-209 (FALV…FGLW), and 210-230 (PLVA…VFIR).

Belongs to the CobS family. Mg(2+) serves as cofactor.

It is found in the cell inner membrane. The enzyme catalyses alpha-ribazole + adenosylcob(III)inamide-GDP = adenosylcob(III)alamin + GMP + H(+). It catalyses the reaction alpha-ribazole 5'-phosphate + adenosylcob(III)inamide-GDP = adenosylcob(III)alamin 5'-phosphate + GMP + H(+). The protein operates within cofactor biosynthesis; adenosylcobalamin biosynthesis; adenosylcobalamin from cob(II)yrinate a,c-diamide: step 7/7. In terms of biological role, joins adenosylcobinamide-GDP and alpha-ribazole to generate adenosylcobalamin (Ado-cobalamin). Also synthesizes adenosylcobalamin 5'-phosphate from adenosylcobinamide-GDP and alpha-ribazole 5'-phosphate. The protein is Adenosylcobinamide-GDP ribazoletransferase of Rhizobium etli (strain CIAT 652).